The following is an 84-amino-acid chain: Toxin BmKaTx16 (84 aa).

Positions 1–19 are cleaved as a signal peptide; the sequence is MNYLVMISFALLLMTGVES. The LCN-type CS-alpha/beta domain occupies 21–83; that stretch reads RDAYIAKPHN…VPIRVPGKCH (63 aa). Intrachain disulfides connect C31–C82, C35–C55, C41–C65, and C45–C67. A propeptide (removed by a carboxypeptidase) is located at residue R84.

It belongs to the long (4 C-C) scorpion toxin superfamily. Sodium channel inhibitor family. Alpha subfamily. In terms of tissue distribution, expressed by the venom gland.

Its subcellular location is the secreted. Functionally, alpha toxins bind voltage-independently at site-3 of sodium channels (Nav) and inhibit the inactivation of the activated channels, thereby blocking neuronal transmission. This chain is Toxin BmKaTx16, found in Olivierus martensii (Manchurian scorpion).